A 692-amino-acid chain; its full sequence is Protein arginine N-methyltransferase 7 (692 aa).

2 SAM-dependent MTase PRMT-type domains span residues 14–359 (ENSW…YSLW) and 368–692 (AKTV…QEKR).

It belongs to the class I-like SAM-binding methyltransferase superfamily. Protein arginine N-methyltransferase family. PRMT7 subfamily.

Its function is as follows. Essential arginine methyltransferase that can both catalyze the formation of omega-N monomethylarginine (MMA) and symmetrical dimethylarginine (sDMA). Specifically mediates the symmetrical dimethylation of arginine residues in the small nuclear ribonucleoproteins SmD1 and SmD3. This chain is Protein arginine N-methyltransferase 7 (Art7), found in Drosophila pseudoobscura pseudoobscura (Fruit fly).